Consider the following 454-residue polypeptide: CCA-adding enzyme (454 aa).

ATP-binding residues include S59 and R62. Residues S59 and R62 each coordinate CTP. Mg(2+)-binding residues include D71, D73, and D125. ATP-binding residues include H148, K167, and Y176. Residues H148, K167, and Y176 each coordinate CTP.

It belongs to the tRNA nucleotidyltransferase/poly(A) polymerase family. Archaeal CCA-adding enzyme subfamily. Homodimer. Mg(2+) serves as cofactor.

It carries out the reaction a tRNA precursor + 2 CTP + ATP = a tRNA with a 3' CCA end + 3 diphosphate. The enzyme catalyses a tRNA with a 3' CCA end + 2 CTP + ATP = a tRNA with a 3' CCACCA end + 3 diphosphate. Functionally, catalyzes the addition and repair of the essential 3'-terminal CCA sequence in tRNAs without using a nucleic acid template. Adds these three nucleotides in the order of C, C, and A to the tRNA nucleotide-73, using CTP and ATP as substrates and producing inorganic pyrophosphate. tRNA 3'-terminal CCA addition is required both for tRNA processing and repair. Also involved in tRNA surveillance by mediating tandem CCA addition to generate a CCACCA at the 3' terminus of unstable tRNAs. While stable tRNAs receive only 3'-terminal CCA, unstable tRNAs are marked with CCACCA and rapidly degraded. The protein is CCA-adding enzyme of Methanosarcina mazei (strain ATCC BAA-159 / DSM 3647 / Goe1 / Go1 / JCM 11833 / OCM 88) (Methanosarcina frisia).